The chain runs to 513 residues: MRRIKIFDTTLRDGEQSPGASMSIEEKVEMALMLEDLGVDLIEAGFPVSSPVQFEAVKRVASAVQKPIVVGLARCVEKDIDAAYEALKDRPKDKRMIHVFIATSPIHRKYKLRMEKEEILERIRRYVGYAKQFFDLVEFSAEDASRTEVPFLIEAYKTAIEAGATTINVPDTVGYALPDEFGELIKTLREGVPGIENVDLSVHCHNDLGLAVANSLAAVQNGATQVEVTLNGIGERAGNCALEEFVMILKVRKDKLPYETGIKTELIYPASRLLTHITGLIPSRNKPIVGENVFLHESGIHQDGVLKHRETYEIMKPSDIGRSSETLVLGRHSGKHALRKKLETYGIKLDEETFQKVFEKFTELADRKKEVYDDDLFSIVSEVLREPINGYKLVHFHVHTGNTLLPTAAVVLQVGNEKREAAEAGNGPVDAIFKAIDKALGIQPKLEEYIIQAVGTGKNAQGEVKLTLRIDNELYSGRGVSTDIVEASAIAYINAINKYLIAKGLLRKNGGAE.

In terms of domain architecture, Pyruvate carboxyltransferase spans 4 to 268; that stretch reads IKIFDTTLRD…ETGIKTELIY (265 aa). The Mn(2+) site is built by Asp-13, His-203, His-205, and Asn-239. Residues 392 to 513 are regulatory domain; it reads KLVHFHVHTG…GLLRKNGGAE (122 aa).

The protein belongs to the alpha-IPM synthase/homocitrate synthase family. LeuA type 1 subfamily. As to quaternary structure, homodimer. Mn(2+) serves as cofactor.

The protein resides in the cytoplasm. It carries out the reaction 3-methyl-2-oxobutanoate + acetyl-CoA + H2O = (2S)-2-isopropylmalate + CoA + H(+). The protein operates within amino-acid biosynthesis; L-leucine biosynthesis; L-leucine from 3-methyl-2-oxobutanoate: step 1/4. Functionally, catalyzes the condensation of the acetyl group of acetyl-CoA with 3-methyl-2-oxobutanoate (2-ketoisovalerate) to form 3-carboxy-3-hydroxy-4-methylpentanoate (2-isopropylmalate). The sequence is that of 2-isopropylmalate synthase from Thermotoga maritima (strain ATCC 43589 / DSM 3109 / JCM 10099 / NBRC 100826 / MSB8).